Reading from the N-terminus, the 142-residue chain is ATP synthase epsilon chain (142 aa).

This sequence belongs to the ATPase epsilon chain family. In terms of assembly, F-type ATPases have 2 components, CF(1) - the catalytic core - and CF(0) - the membrane proton channel. CF(1) has five subunits: alpha(3), beta(3), gamma(1), delta(1), epsilon(1). CF(0) has three main subunits: a, b and c.

It localises to the cell inner membrane. Functionally, produces ATP from ADP in the presence of a proton gradient across the membrane. This chain is ATP synthase epsilon chain, found in Haemophilus influenzae (strain 86-028NP).